A 467-amino-acid polypeptide reads, in one-letter code: 2-succinylbenzoate--CoA ligase (467 aa).

Belongs to the ATP-dependent AMP-binding enzyme family. MenE subfamily.

The catalysed reaction is 2-succinylbenzoate + ATP + CoA = 2-succinylbenzoyl-CoA + AMP + diphosphate. Its pathway is quinol/quinone metabolism; 1,4-dihydroxy-2-naphthoate biosynthesis; 1,4-dihydroxy-2-naphthoate from chorismate: step 5/7. The protein operates within quinol/quinone metabolism; menaquinone biosynthesis. In terms of biological role, converts 2-succinylbenzoate (OSB) to 2-succinylbenzoyl-CoA (OSB-CoA). The protein is 2-succinylbenzoate--CoA ligase of Listeria monocytogenes serovar 1/2a (strain ATCC BAA-679 / EGD-e).